The primary structure comprises 367 residues: Protein-glutamate methylesterase/protein-glutamine glutaminase (367 aa).

One can recognise a Response regulatory domain in the interval 6–123; the sequence is RVLVVDDSAF…SLGIKQLADE (118 aa). Asp57 bears the 4-aspartylphosphate mark. A CheB-type methylesterase domain is found at 165-361; it reads ISKKEIVVVI…DILLKKVNEY (197 aa). Catalysis depends on residues Ser177, His204, and Asp303.

Belongs to the CheB family. Post-translationally, phosphorylated by CheA. Phosphorylation of the N-terminal regulatory domain activates the methylesterase activity.

The protein resides in the cytoplasm. It carries out the reaction [protein]-L-glutamate 5-O-methyl ester + H2O = L-glutamyl-[protein] + methanol + H(+). The catalysed reaction is L-glutaminyl-[protein] + H2O = L-glutamyl-[protein] + NH4(+). Its function is as follows. Involved in chemotaxis. Part of a chemotaxis signal transduction system that modulates chemotaxis in response to various stimuli. Catalyzes the demethylation of specific methylglutamate residues introduced into the chemoreceptors (methyl-accepting chemotaxis proteins or MCP) by CheR. Also mediates the irreversible deamidation of specific glutamine residues to glutamic acid. This is Protein-glutamate methylesterase/protein-glutamine glutaminase from Caldanaerobacter subterraneus subsp. tengcongensis (strain DSM 15242 / JCM 11007 / NBRC 100824 / MB4) (Thermoanaerobacter tengcongensis).